The primary structure comprises 376 residues: Glutamate 5-kinase (376 aa).

Residue Lys15 coordinates ATP. The substrate site is built by Ser55, Asp142, and Asn154. Residues 174-175 and 216-222 contribute to the ATP site; these read TD and TGGMATK. In terms of domain architecture, PUA spans 281–359; sequence AGKVLVDAGA…AEIEQLLGYR (79 aa).

This sequence belongs to the glutamate 5-kinase family.

The protein resides in the cytoplasm. It catalyses the reaction L-glutamate + ATP = L-glutamyl 5-phosphate + ADP. It participates in amino-acid biosynthesis; L-proline biosynthesis; L-glutamate 5-semialdehyde from L-glutamate: step 1/2. Functionally, catalyzes the transfer of a phosphate group to glutamate to form L-glutamate 5-phosphate. The protein is Glutamate 5-kinase of Trichlorobacter lovleyi (strain ATCC BAA-1151 / DSM 17278 / SZ) (Geobacter lovleyi).